The primary structure comprises 201 residues: ATP-dependent Clp protease proteolytic subunit (201 aa).

Ser97 (nucleophile) is an active-site residue. The active site involves His122.

This sequence belongs to the peptidase S14 family. As to quaternary structure, fourteen ClpP subunits assemble into 2 heptameric rings which stack back to back to give a disk-like structure with a central cavity, resembling the structure of eukaryotic proteasomes.

The protein resides in the cytoplasm. The catalysed reaction is Hydrolysis of proteins to small peptides in the presence of ATP and magnesium. alpha-casein is the usual test substrate. In the absence of ATP, only oligopeptides shorter than five residues are hydrolyzed (such as succinyl-Leu-Tyr-|-NHMec, and Leu-Tyr-Leu-|-Tyr-Trp, in which cleavage of the -Tyr-|-Leu- and -Tyr-|-Trp bonds also occurs).. Cleaves peptides in various proteins in a process that requires ATP hydrolysis. Has a chymotrypsin-like activity. Plays a major role in the degradation of misfolded proteins. The chain is ATP-dependent Clp protease proteolytic subunit from Nitratidesulfovibrio vulgaris (strain DSM 19637 / Miyazaki F) (Desulfovibrio vulgaris).